The primary structure comprises 164 residues: V-type proton ATPase subunit c3 (164 aa).

Topologically, residues 1–11 are lumenal; the sequence is MSTFSGDETAP. The helical transmembrane segment at 12–32 threads the bilayer; that stretch reads FFGFLGAAAALVFSCMGAAYG. Over 33 to 54 the chain is Cytoplasmic; the sequence is TAKSGVGVASMGVMRPELVMKS. A helical transmembrane segment spans residues 55 to 75; sequence IVPVVMAGVLGIYGLIIAVII. The Lumenal portion of the chain corresponds to 76–94; the sequence is STGINPKAKSYYLFDGYAH. A helical membrane pass occupies residues 95–116; that stretch reads LSSGLACGLAGLSAGMAIGIVG. Residues 117 to 128 lie on the Cytoplasmic side of the membrane; it reads DAGVRANAQQPK. The chain crosses the membrane as a helical span at residues 129-154; that stretch reads LFVGMILILIFAEALALYGLIVGIIL. The Lumenal portion of the chain corresponds to 155-164; the sequence is SSRAGQSRAE.

Belongs to the V-ATPase proteolipid subunit family. In terms of assembly, V-ATPase is a heteromultimeric enzyme composed of a peripheral catalytic V1 complex (components A to H) attached to an integral membrane V0 proton pore complex (components: a, c, c'', d and e). The proteolipid components c and c'' are present as a hexameric ring that forms the proton-conducting pore. Expressed in leaf, root, flower and silique.

The protein resides in the vacuole membrane. Its function is as follows. Proton-conducting pore forming subunit of the membrane integral V0 complex of vacuolar ATPase. V-ATPase is responsible for acidifying a variety of intracellular compartments in eukaryotic cells. This Arabidopsis thaliana (Mouse-ear cress) protein is V-type proton ATPase subunit c3 (VHA-c3).